The following is a 422-amino-acid chain: UDP-N-acetylglucosamine 1-carboxyvinyltransferase (422 aa).

Phosphoenolpyruvate is bound at residue 22 to 23 (KN). Arg95 is a UDP-N-acetyl-alpha-D-glucosamine binding site. Residue Cys119 is the Proton donor of the active site. Cys119 is subject to 2-(S-cysteinyl)pyruvic acid O-phosphothioketal. UDP-N-acetyl-alpha-D-glucosamine-binding positions include 124 to 128 (RPIDQ), Asp309, and Val331.

The protein belongs to the EPSP synthase family. MurA subfamily.

Its subcellular location is the cytoplasm. It carries out the reaction phosphoenolpyruvate + UDP-N-acetyl-alpha-D-glucosamine = UDP-N-acetyl-3-O-(1-carboxyvinyl)-alpha-D-glucosamine + phosphate. It functions in the pathway cell wall biogenesis; peptidoglycan biosynthesis. Functionally, cell wall formation. Adds enolpyruvyl to UDP-N-acetylglucosamine. The chain is UDP-N-acetylglucosamine 1-carboxyvinyltransferase from Anaeromyxobacter sp. (strain Fw109-5).